An 89-amino-acid polypeptide reads, in one-letter code: NADH-ubiquinone oxidoreductase chain 4L (89 aa).

3 consecutive transmembrane segments (helical) span residues 1–21 (MNIT…NRKN), 22–42 (IILM…LILV), and 57–77 (IYII…LVAF).

It belongs to the complex I subunit 4L family.

The protein resides in the mitochondrion membrane. It carries out the reaction a ubiquinone + NADH + 5 H(+)(in) = a ubiquinol + NAD(+) + 4 H(+)(out). Functionally, core subunit of the mitochondrial membrane respiratory chain NADH dehydrogenase (Complex I) that is believed to belong to the minimal assembly required for catalysis. Complex I functions in the transfer of electrons from NADH to the respiratory chain. The immediate electron acceptor for the enzyme is believed to be ubiquinone. This chain is NADH-ubiquinone oxidoreductase chain 4L (ndh-4L), found in Neurospora crassa (strain ATCC 24698 / 74-OR23-1A / CBS 708.71 / DSM 1257 / FGSC 987).